The chain runs to 72 residues: Translation initiation factor IF-1 (72 aa).

An S1-like domain is found at Met-1–Arg-72.

The protein belongs to the IF-1 family. As to quaternary structure, component of the 30S ribosomal translation pre-initiation complex which assembles on the 30S ribosome in the order IF-2 and IF-3, IF-1 and N-formylmethionyl-tRNA(fMet); mRNA recruitment can occur at any time during PIC assembly.

The protein resides in the cytoplasm. One of the essential components for the initiation of protein synthesis. Stabilizes the binding of IF-2 and IF-3 on the 30S subunit to which N-formylmethionyl-tRNA(fMet) subsequently binds. Helps modulate mRNA selection, yielding the 30S pre-initiation complex (PIC). Upon addition of the 50S ribosomal subunit IF-1, IF-2 and IF-3 are released leaving the mature 70S translation initiation complex. The protein is Translation initiation factor IF-1 of Colwellia psychrerythraea (strain 34H / ATCC BAA-681) (Vibrio psychroerythus).